Here is a 491-residue protein sequence, read N- to C-terminus: MPLPVQVFNLQGAVEPMQIDVDPQEDPQNAPDVNYVVENPSLDLEQYAASYSGLMRIERLQFIADHCPTLRVEALKMALSFVQRTFNVDMYEEIHRKLSEATRSSLRELQNAPDAIPESGVEPPALDTAWVEATRKKALLKLEKLDTDLKNYKGNSIKESIRRGHDDLGDHYLDCGDLSNALKCYSRARDYCTSAKHVINMCLNVIKVSVYLQNWSHVLSYVSKAESTPEIAEQRGERDSQTQAILTKLKCAAGLAELAARKYKQAAKCLLLASFDHCDFPELLSPSNVAIYGGLCALATFDRQELQRNVISSSSFKLFLELEPQVRDIIFKFYESKYASCLKMLDEMKDNLLLDMYLAPHVRTLYTQIRNRALIQYFSPYVSADMHRMAAAFNTTVAALEDELTQLILEGLISARVDSHSKILYARDVDQRSTTFEKSLLMGKEFQRRAKAMMLRAAVLRNQIHVKSPPREGSQGELTPANSQSRMSTNM.

The PCI domain maps to 269–431 (CLLLASFDHC…KILYARDVDQ (163 aa)). The segment at 465–491 (HVKSPPREGSQGELTPANSQSRMSTNM) is disordered. Serine 468 and serine 474 each carry phosphoserine. Residues 476–491 (GELTPANSQSRMSTNM) show a composition bias toward polar residues. Threonine 479 bears the Phosphothreonine mark. At serine 483 the chain carries Phosphoserine.

It belongs to the CSN1 family. In terms of assembly, component of the CSN complex, composed of COPS1/GPS1, COPS2, COPS3, COPS4, COPS5, COPS6, COPS7 (COPS7A or COPS7B), COPS8 and COPS9 isoform 1. In the complex, it probably interacts directly with COPS2, COPS3, COPS4 and COPS5. Interacts directly with inositol kinase ITPK1. Interacts with CAPN8. Interacts with USP48. Interacts with ASB4; this interaction negatively regulates GPS1. As to expression, widely expressed.

It is found in the cytoplasm. Its subcellular location is the nucleus. Functionally, essential component of the COP9 signalosome complex (CSN), a complex involved in various cellular and developmental processes. The CSN complex is an essential regulator of the ubiquitin (Ubl) conjugation pathway by mediating the deneddylation of the cullin subunits of SCF-type E3 ligase complexes, leading to decrease the Ubl ligase activity of SCF-type complexes such as SCF, CSA or DDB2. The complex is also involved in phosphorylation of p53/TP53, c-jun/JUN, IkappaBalpha/NFKBIA, ITPK1 and IRF8/ICSBP, possibly via its association with CK2 and PKD kinases. CSN-dependent phosphorylation of TP53 and JUN promotes and protects degradation by the Ubl system, respectively. Suppresses G-protein- and mitogen-activated protein kinase-mediated signal transduction. The protein is COP9 signalosome complex subunit 1 (GPS1) of Homo sapiens (Human).